Here is a 47-residue protein sequence, read N- to C-terminus: UPF0391 membrane protein rrnAC2507 (47 aa).

2 consecutive transmembrane segments (helical) span residues 5 to 25 (VVLVILAVVAGIAGFRGIAGL) and 27 to 47 (FRVAKFLIVIFLVLALVTFLL).

Belongs to the UPF0391 family.

The protein localises to the cell membrane. In Haloarcula marismortui (strain ATCC 43049 / DSM 3752 / JCM 8966 / VKM B-1809) (Halobacterium marismortui), this protein is UPF0391 membrane protein rrnAC2507.